Consider the following 369-residue polypeptide: DNA polymerase IV 2 (369 aa).

One can recognise a UmuC domain in the interval 17–201; sequence VFHVDMDSFF…LPVSRIPGVG (185 aa). Mg(2+) is bound by residues D21 and D119. E120 is a catalytic residue.

This sequence belongs to the DNA polymerase type-Y family. As to quaternary structure, monomer. The cofactor is Mg(2+).

Its subcellular location is the cytoplasm. The catalysed reaction is DNA(n) + a 2'-deoxyribonucleoside 5'-triphosphate = DNA(n+1) + diphosphate. Its function is as follows. Poorly processive, error-prone DNA polymerase involved in untargeted mutagenesis. Copies undamaged DNA at stalled replication forks, which arise in vivo from mismatched or misaligned primer ends. These misaligned primers can be extended by PolIV. Exhibits no 3'-5' exonuclease (proofreading) activity. May be involved in translesional synthesis. The sequence is that of DNA polymerase IV 2 (dbh2) from Methanosarcina mazei (strain ATCC BAA-159 / DSM 3647 / Goe1 / Go1 / JCM 11833 / OCM 88) (Methanosarcina frisia).